The chain runs to 339 residues: Deubiquitinase and deneddylase Dub2 (339 aa).

A helical membrane pass occupies residues 36 to 56; sequence IIIALFLIVISCGLILCAYTF. Residues H203, D220, and C282 contribute to the active site.

It belongs to the peptidase C48 family.

Its subcellular location is the secreted. It localises to the host cell. It is found in the membrane. In terms of biological role, effector proteins function to alter host cell physiology and promote bacterial survival in host tissues. This protease possesses deubiquitinating and deneddylating activities. The polypeptide is Deubiquitinase and deneddylase Dub2 (cdu2) (Chlamydia trachomatis serovar D (strain ATCC VR-885 / DSM 19411 / UW-3/Cx)).